Consider the following 991-residue polypeptide: Collagenase ColT (991 aa).

A signal peptide spans 1–28; it reads MKKKFIKMLCSIAIGCMISTSYSIKVSA. Positions 29-52 are excised as a propeptide; the sequence is FSNGNTKTNPNGEFKSLSLNSTNP. An S1 metalloprotease domain, degrades FALGPA (furylacryloyl-Leu-Gly-Pro-Ala) region spans residues 53 to 727; it reads YKTKYSFNDL…VYDIVFHGLL (675 aa). The interval 57-330 is activator domain; that stretch reads YSFNDLNKLS…AIEAIKEDFN (274 aa). Residues 340–611 are catalytic subdomain; sequence DINKLIEEGK…MENLVNNYDN (272 aa). Glu-440 is a Ca(2+) binding site. His-465 provides a ligand contact to Zn(2+). Glu-466 is an active-site residue. His-469 is a Zn(2+) binding site. Ca(2+) is bound by residues Gly-473, Ile-477, and Gly-479. Glu-499 serves as a coordination point for Zn(2+). The helper subdomain stretch occupies residues 619–731; it reads DDYMKQYDNK…VFHGLLSHNK (113 aa). Collagen-binding domain regions lie at residues 755-870 and 878-991; these read IYEK…NISD and IKKI…VIIN. Ca(2+) is bound by residues Glu-757, Glu-759, Asn-761, Asp-784, Asp-787, Glu-883, Glu-885, Asn-887, Asp-888, Asp-910, and Asp-913.

The protein belongs to the peptidase M9B family. Collagenase subfamily. Ca(2+) is required as a cofactor. The cofactor is Zn(2+).

The protein localises to the secreted. The catalysed reaction is Digestion of native collagen in the triple helical region at Xaa-|-Gly bonds. With synthetic peptides, a preference is shown for Gly at P3 and P1', Pro and Ala at P2 and P2', and hydroxyproline, Ala or Arg at P3'.. Its activity is regulated as follows. Partially inhibited by 1-10-phenanthroline; inactivation is irreversible. Partially inhibited by EDTA; inactivation is reversible. Inhibited by broad-spectrum zinc metalloprotease inhibitor batimastat. N-aryl mercaptoacetamide-based inhibitors have been isolated that act on clostridial collagenases with submicromolar affinity while having negligibile activity on human collagenases. In terms of biological role, clostridial collagenases are among the most efficient degraders of eukaryotic collagen known; saprophytes use collagen as a carbon source while pathogens additionally digest collagen to aid in host colonization. Has both tripeptidylcarboxypeptidase on Gly-X-Y and endopeptidase activities; the endopeptidase cuts within the triple helix region of collagen while tripeptidylcarboxypeptidase successively digests the exposed ends, thus clostridial collagenases can digest large sections of collagen. The activator domain (residues 57-330) and catalytic subdomain (340-611) open and close around substrate allowing digestion when the protein is closed. In Clostridium tetani (strain Massachusetts / E88), this protein is Collagenase ColT.